The primary structure comprises 82 residues: MAVKERVGVVVSDKMDKTVVVAIEDRTAHPKYGKIVVRTKRYKAHDEDNRAKTGDRVRIQETRPLSRTKRWTVAEILESVGA.

Belongs to the universal ribosomal protein uS17 family. Part of the 30S ribosomal subunit.

Functionally, one of the primary rRNA binding proteins, it binds specifically to the 5'-end of 16S ribosomal RNA. The sequence is that of Small ribosomal subunit protein uS17 from Synechococcus elongatus (strain ATCC 33912 / PCC 7942 / FACHB-805) (Anacystis nidulans R2).